Reading from the N-terminus, the 785-residue chain is Phenylalanine--tRNA ligase beta subunit (785 aa).

The 113-residue stretch at 38–150 (CEHLKTFVIA…NTYNVGDTFF (113 aa)) folds into the tRNA-binding domain. One can recognise a B5 domain in the interval 394 to 470 (VDNIELNFFP…RLYGYDKICE (77 aa)). Residues aspartate 448, aspartate 454, glutamate 457, and glutamate 458 each contribute to the Mg(2+) site. The 94-residue stretch at 690–783 (SCYQSVKRDF…VAEKLGGVLR (94 aa)) folds into the FDX-ACB domain.

It belongs to the phenylalanyl-tRNA synthetase beta subunit family. Type 1 subfamily. As to quaternary structure, tetramer of two alpha and two beta subunits. It depends on Mg(2+) as a cofactor.

Its subcellular location is the cytoplasm. The enzyme catalyses tRNA(Phe) + L-phenylalanine + ATP = L-phenylalanyl-tRNA(Phe) + AMP + diphosphate + H(+). The polypeptide is Phenylalanine--tRNA ligase beta subunit (Ehrlichia canis (strain Jake)).